A 262-amino-acid chain; its full sequence is Methanethiol S-methyltransferase (262 aa).

5 helical membrane passes run 22-42, 55-75, 100-120, 134-154, and 195-215; these read LYSLLSYLFFLMTLLYLIGFV, PGASWPLALLVDVLLITLFAV, ATYVLASSVVLVVMFWLWQPI, AVLTTLFWLGWGLILVATFLI, and GFLMAFWATPEMTVGHLVFAL.

This sequence belongs to the nurim family.

The protein resides in the membrane. It carries out the reaction methanethiol + S-adenosyl-L-methionine = dimethyl sulfide + S-adenosyl-L-homocysteine + H(+). Catalyzes the methylation of methanethiol (MeSH) to yield dimethylsulphide (DMS). This is Methanethiol S-methyltransferase from Pseudomonas deceptionensis.